Consider the following 244-residue polypeptide: S-adenosyl-L-methionine-dependent Diels-Alderase iliD (244 aa).

This sequence belongs to the class I-like SAM-binding methyltransferase superfamily. Erg6/SMT family. Requires S-adenosyl-L-methionine as cofactor.

The catalysed reaction is 3-[(2E,4E,8S,10E,12Z)-4,8-dimethyltetradeca-2,4,10,12-tetraenoyl]-4-hydroxy-5-(4-hydroxyphenyl)-1,2-dihydropyridin-2-one = ilicicolin H. The protein operates within mycotoxin biosynthesis. Its function is as follows. S-adenosyl-l-methionine-dependent Diels-Alderase; part of the gene cluster that mediates the biosynthesis of ilicicolin H, a 4-hydroxy-2-pyridonealkaloid that has potent and broad antifungal activities by inhibiting the mitochondrial respiration chain. IliD catalyzes the Diels-Alder reaction that converts the acyclic 2-pyridone intermediate to 8-epi-ilicicolin H. The biosynthesis of ilicicolin H starts with formation of the tetramic acid by the hybrid PKS-NRPS synthetase iliA with the partnering trans-enoyl reductase iliB since iliA lacks a designated enoylreductase (ER) domain. The cytochrome P450 monooxygenase iliC then catalyzes the ring expansion of the tetramate to the acyclic 2-pyridone. The pericyclase iliD further converts the acyclic 2-pyridone into 8-epi-ilicicolin H. 8-epi-ilicicolin H might then spontaneously convert to ilicicolin H since ilicicolin H is produced in the absence of the epimerase iliE, in contrast to what was observed for the Talaromyces variabilis ilicolin H biosynthetic pathway. This chain is S-adenosyl-L-methionine-dependent Diels-Alderase iliD, found in Neonectria sp. (strain DH2).